The following is a 180-amino-acid chain: Ribulose bisphosphate carboxylase small subunit, chloroplastic 2 (180 aa).

Residues 1-56 constitute a chloroplast transit peptide; that stretch reads MASSVMSSAAVATSTNAAQASMVAPFTGLKSAASFPVSRKQNLDITSIASNGGRVQ.

It belongs to the RuBisCO small chain family. As to quaternary structure, heterohexadecamer of 8 large and 8 small subunits.

Its subcellular location is the plastid. The protein resides in the chloroplast. Functionally, ruBisCO catalyzes two reactions: the carboxylation of D-ribulose 1,5-bisphosphate, the primary event in carbon dioxide fixation, as well as the oxidative fragmentation of the pentose substrate. Both reactions occur simultaneously and in competition at the same active site. Although the small subunit is not catalytic it is essential for maximal activity. The sequence is that of Ribulose bisphosphate carboxylase small subunit, chloroplastic 2 from Petunia hybrida (Petunia).